The primary structure comprises 130 residues: MYRAVTRQIEVTVEPNFVPEQSSADRSRYFWSYTIVITNSGEETVQLKTRHWIITDATGRQQEVKGEGVVGEQPTLAPGERFEYTSGVPLSTASGFMTGRYQMVSESGERFEIDVPTFSLDSPDNKRVLN.

The ApaG domain maps to Arg-3 to Arg-127.

In Bradyrhizobium diazoefficiens (strain JCM 10833 / BCRC 13528 / IAM 13628 / NBRC 14792 / USDA 110), this protein is Protein ApaG.